Reading from the N-terminus, the 721-residue chain is Polyribonucleotide nucleotidyltransferase (721 aa).

Mg(2+)-binding residues include aspartate 495 and aspartate 501. A KH domain is found at 562 to 621; it reads PRLLSFRIDPELIGTVIGPGGRTIKGITERTNTKIDIEDGGIVTIASHDGAAAEEAQKII. Residues 631–699 enclose the S1 motif domain; the sequence is GEIFSGVVTR…SRGRINLTLR (69 aa). The tract at residues 701-721 is disordered; that stretch reads VGQNNGMSYPEPTPTPVAPLN. Pro residues predominate over residues 711–721; the sequence is EPTPTPVAPLN.

Belongs to the polyribonucleotide nucleotidyltransferase family. Mg(2+) is required as a cofactor.

Its subcellular location is the cytoplasm. It catalyses the reaction RNA(n+1) + phosphate = RNA(n) + a ribonucleoside 5'-diphosphate. Involved in mRNA degradation. Catalyzes the phosphorolysis of single-stranded polyribonucleotides processively in the 3'- to 5'-direction. In Prochlorococcus marinus (strain MIT 9215), this protein is Polyribonucleotide nucleotidyltransferase.